The sequence spans 432 residues: Adenosine 3'-phospho 5'-phosphosulfate transporter 1 (432 aa).

9 helical membrane passes run tryptophan 5–glutamate 25, valine 40–phenylalanine 60, alanine 109–leucine 129, phenylalanine 154–cysteine 174, tryptophan 238–glycine 258, proline 265–threonine 285, serine 299–leucine 319, leucine 353–leucine 373, and glycine 387–leucine 407. Serine 427 is subject to Phosphoserine.

Belongs to the nucleotide-sugar transporter family. SLC35B subfamily. Highly expressed in the placenta, pancreas, mammary gland and skeletal muscle. Weakly or not expressed in colon, heart and prostate. Expressed in the brain, predominantly in frontal lobe gray matter, subcortical frontal white matter and cerebellum.

The protein resides in the golgi apparatus membrane. The catalysed reaction is 3'-phosphoadenylyl sulfate(in) + adenosine 3',5'-bisphosphate(out) = 3'-phosphoadenylyl sulfate(out) + adenosine 3',5'-bisphosphate(in). In terms of biological role, probably functions as a 3'-phosphoadenylyl sulfate:adenosine 3',5'-bisphosphate antiporter at the Golgi membranes. Mediates the transport from the cytosol into the lumen of the Golgi of 3'-phosphoadenylyl sulfate/adenosine 3'-phospho 5'-phosphosulfate (PAPS), a universal sulfuryl donor for sulfation events that take place in that compartment. The polypeptide is Adenosine 3'-phospho 5'-phosphosulfate transporter 1 (Homo sapiens (Human)).